Here is a 272-residue protein sequence, read N- to C-terminus: Eukaryotic translation initiation factor 3 subunit G (272 aa).

2 disordered regions span residues 1 to 28 (MPAL…PTEI) and 143 to 187 (AGKA…RGRD). In terms of domain architecture, RRM spans 190–268 (TAIRISNLSE…LILNVEWSKP (79 aa)).

It belongs to the eIF-3 subunit G family. Component of the eukaryotic translation initiation factor 3 (eIF-3) complex.

The protein resides in the cytoplasm. Functionally, RNA-binding component of the eukaryotic translation initiation factor 3 (eIF-3) complex, which is involved in protein synthesis of a specialized repertoire of mRNAs and, together with other initiation factors, stimulates binding of mRNA and methionyl-tRNAi to the 40S ribosome. The eIF-3 complex specifically targets and initiates translation of a subset of mRNAs involved in cell proliferation. This subunit can bind 18S rRNA. This chain is Eukaryotic translation initiation factor 3 subunit G, found in Culex quinquefasciatus (Southern house mosquito).